The following is a 74-amino-acid chain: ATP synthase subunit c (74 aa).

Helical transmembrane passes span 8-28 (FIGTGLMAIGMYGAALGVSNI) and 52-72 (IGAGLAEAMGLFSFVIAMLLI).

The protein belongs to the ATPase C chain family. In terms of assembly, F-type ATPases have 2 components, F(1) - the catalytic core - and F(0) - the membrane proton channel. F(1) has five subunits: alpha(3), beta(3), gamma(1), delta(1), epsilon(1). F(0) has three main subunits: a(1), b(2) and c(10-14). The alpha and beta chains form an alternating ring which encloses part of the gamma chain. F(1) is attached to F(0) by a central stalk formed by the gamma and epsilon chains, while a peripheral stalk is formed by the delta and b chains.

Its subcellular location is the cell inner membrane. F(1)F(0) ATP synthase produces ATP from ADP in the presence of a proton or sodium gradient. F-type ATPases consist of two structural domains, F(1) containing the extramembraneous catalytic core and F(0) containing the membrane proton channel, linked together by a central stalk and a peripheral stalk. During catalysis, ATP synthesis in the catalytic domain of F(1) is coupled via a rotary mechanism of the central stalk subunits to proton translocation. Functionally, key component of the F(0) channel; it plays a direct role in translocation across the membrane. A homomeric c-ring of between 10-14 subunits forms the central stalk rotor element with the F(1) delta and epsilon subunits. The protein is ATP synthase subunit c of Rickettsia conorii (strain ATCC VR-613 / Malish 7).